A 317-amino-acid polypeptide reads, in one-letter code: 4-diphosphocytidyl-2-C-methyl-D-erythritol kinase (317 aa).

Lys11 is a catalytic residue. Pro99–Thr109 provides a ligand contact to ATP. The active site involves Asp141.

This sequence belongs to the GHMP kinase family. IspE subfamily.

It carries out the reaction 4-CDP-2-C-methyl-D-erythritol + ATP = 4-CDP-2-C-methyl-D-erythritol 2-phosphate + ADP + H(+). It participates in isoprenoid biosynthesis; isopentenyl diphosphate biosynthesis via DXP pathway; isopentenyl diphosphate from 1-deoxy-D-xylulose 5-phosphate: step 3/6. Its function is as follows. Catalyzes the phosphorylation of the position 2 hydroxy group of 4-diphosphocytidyl-2C-methyl-D-erythritol. The chain is 4-diphosphocytidyl-2-C-methyl-D-erythritol kinase from Nostoc sp. (strain PCC 7120 / SAG 25.82 / UTEX 2576).